The following is a 288-amino-acid chain: MSDRLAVLPQYLLPKQRLTLFMGRLAGARAGSLTTAVIRWFIARYGVDMSEAENPDPAAYASFNEFFTRPLRAGARPLAQADFICPVDGAISQFGAIERDQIFQAKGHRYTTTALLGGDRELATHFDHGHFATLYLSPRDYHRIHMPCAGRLTRMIHVPGELFSVNPTTARGVPGLFARNERVVCVFDGEHGPFVMVLVGATIVGSMATVWHGVVNSPRPGMIRDWRYPEGQVVLGQGEEMGRFLLGSTVVMLFPQDCLRFNAEWAPEKAIRLGEKMGDLFSCTPQAV.

Active-site charge relay system; for autoendoproteolytic cleavage activity residues include D88, H145, and S248. The Schiff-base intermediate with substrate; via pyruvic acid; for decarboxylase activity role is filled by S248. At S248 the chain carries Pyruvic acid (Ser); by autocatalysis.

The protein belongs to the phosphatidylserine decarboxylase family. PSD-B subfamily. Prokaryotic type I sub-subfamily. In terms of assembly, heterodimer of a large membrane-associated beta subunit and a small pyruvoyl-containing alpha subunit. The cofactor is pyruvate. In terms of processing, is synthesized initially as an inactive proenzyme. Formation of the active enzyme involves a self-maturation process in which the active site pyruvoyl group is generated from an internal serine residue via an autocatalytic post-translational modification. Two non-identical subunits are generated from the proenzyme in this reaction, and the pyruvate is formed at the N-terminus of the alpha chain, which is derived from the carboxyl end of the proenzyme. The autoendoproteolytic cleavage occurs by a canonical serine protease mechanism, in which the side chain hydroxyl group of the serine supplies its oxygen atom to form the C-terminus of the beta chain, while the remainder of the serine residue undergoes an oxidative deamination to produce ammonia and the pyruvoyl prosthetic group on the alpha chain. During this reaction, the Ser that is part of the protease active site of the proenzyme becomes the pyruvoyl prosthetic group, which constitutes an essential element of the active site of the mature decarboxylase.

It is found in the cell membrane. The enzyme catalyses a 1,2-diacyl-sn-glycero-3-phospho-L-serine + H(+) = a 1,2-diacyl-sn-glycero-3-phosphoethanolamine + CO2. The protein operates within phospholipid metabolism; phosphatidylethanolamine biosynthesis; phosphatidylethanolamine from CDP-diacylglycerol: step 2/2. Its function is as follows. Catalyzes the formation of phosphatidylethanolamine (PtdEtn) from phosphatidylserine (PtdSer). In Azoarcus sp. (strain BH72), this protein is Phosphatidylserine decarboxylase proenzyme.